A 393-amino-acid polypeptide reads, in one-letter code: SET domain-containing protein DDB_G0283443 (393 aa).

Residues 17–312 (KKIEINETLE…KGDELSISYI (296 aa)) form the SET domain.

This sequence belongs to the class V-like SAM-binding methyltransferase superfamily.

Functionally, probable methyltransferase. This chain is SET domain-containing protein DDB_G0283443, found in Dictyostelium discoideum (Social amoeba).